The primary structure comprises 269 residues: MKKPVFFLLTMIICSYISFACANISDYKVMTWNLQGSSASTESKWNVNVRQLLSGTAGVDILMVQEAGAVPTSAVPTGRHIQPFGVGIPIDEYTWNLGTTSRQDIRYIYHSAIDVGARRVNLAIVSRQRADNVYVLRPTTVASRPVIGIGLGNDVFLTAHALASGGPDAAAIVRVTINFFRQPQMRHLSWFLAGDFNRSPDRLENDLMTEHLERVVAVLAPTEPTQIGGGILDYGVIVDRAPYSQRVEALRNPQLASDHYPVAFLARSC.

Positions 1 to 22 (MKKPVFFLLTMIICSYISFACA) are cleaved as a signal peptide.

The protein localises to the secreted. Functionally, produces a CDT (cytolethal distending toxin) activity, which causes DNA damage in intoxicated cells. This damage induces G2/M cell cycle arrest, chromatin fragmentation, cell distention and nucleus enlargement. This Salmonella typhi protein is Cytolethal distending toxin subunit B homolog (cdtB).